The following is a 416-amino-acid chain: Phosphoglycerate kinase (416 aa).

Positions 23, 24, 25, 26, 39, 40, 63, 64, 66, 67, 122, 123, 170, and 171 each coordinate (2R)-3-phosphoglycerate. G214 lines the ADP pocket. G214 is a CDP binding site. The AMP site is built by A215 and K216. Residue A215 participates in ATP binding. Mg(2+) is bound at residue A215. CDP is bound at residue D219. Position 219 (D219) interacts with Mg(2+). K220 is a binding site for AMP. An ATP-binding site is contributed by K220. G238 is an ADP binding site. G238 is a CDP binding site. Positions 239 and 312 each coordinate AMP. Positions 239 and 312 each coordinate ATP. G337, A339, and F342 together coordinate CDP. ADP is bound at residue F342. An AMP-binding site is contributed by E343. 3 residues coordinate ATP: E343, D374, and T375. D374 provides a ligand contact to Mg(2+).

The protein belongs to the phosphoglycerate kinase family. As to quaternary structure, monomer. Mg(2+) serves as cofactor.

It is found in the cytoplasm. The protein localises to the mitochondrion. It carries out the reaction (2R)-3-phosphoglycerate + ATP = (2R)-3-phospho-glyceroyl phosphate + ADP. It participates in carbohydrate degradation; glycolysis; pyruvate from D-glyceraldehyde 3-phosphate: step 2/5. Catalyzes one of the two ATP producing reactions in the glycolytic pathway via the reversible conversion of 1,3-diphosphoglycerate to 3-phosphoglycerate. Both L- and D- forms of purine and pyrimidine nucleotides can be used as substrates, but the activity is much lower on pyrimidines. Negatively regulates the biosynthesis of acetyl-CoA from pyruvate in the mitochondrion. This is Phosphoglycerate kinase (pgk1) from Hypocrea jecorina (Trichoderma reesei).